A 187-amino-acid chain; its full sequence is Orotate phosphoribosyltransferase (187 aa).

5-phospho-alpha-D-ribose 1-diphosphate is bound by residues Arg-103, Lys-104, Lys-107, and 129 to 137 (EDVTTSGGS). Residues Thr-133 and Arg-161 each contribute to the orotate site.

This sequence belongs to the purine/pyrimidine phosphoribosyltransferase family. PyrE subfamily. In terms of assembly, homodimer. Mg(2+) serves as cofactor.

It carries out the reaction orotidine 5'-phosphate + diphosphate = orotate + 5-phospho-alpha-D-ribose 1-diphosphate. The protein operates within pyrimidine metabolism; UMP biosynthesis via de novo pathway; UMP from orotate: step 1/2. Functionally, catalyzes the transfer of a ribosyl phosphate group from 5-phosphoribose 1-diphosphate to orotate, leading to the formation of orotidine monophosphate (OMP). This is Orotate phosphoribosyltransferase from Methanosarcina acetivorans (strain ATCC 35395 / DSM 2834 / JCM 12185 / C2A).